The sequence spans 528 residues: Na(+)/H(+) antiporter NhaB (528 aa).

Transmembrane regions (helical) follow at residues 23 to 43 (VAIIAFLIINPIVFFLINPFV), 45 to 65 (GWLLVAEFIFTLAMALKCYPL), 90 to 110 (LVANIEVLLLLVFMVAGIYFM), 136 to 156 (CFAAAFLSAFLDALTVIAVVI), 204 to 224 (LLMHAGVGTALGGVTTMVGEP), 237 to 257 (FGEFLIRMSPVTLPVFICGLI), 305 to 325 (GIIAVWLIVALALHLAAVGLI), 350 to 370 (EEALPFTALLAVFFSIVAVII), 392 to 412 (LALFYVANGLLSMVSDNVFVG), 450 to 470 (ATPNGQAAFLFLLTSALAPLI), and 479 to 499 (VMALPYTVVLAIVGLMGIMFF).

The protein belongs to the NhaB Na(+)/H(+) (TC 2.A.34) antiporter family.

It localises to the cell inner membrane. The catalysed reaction is 2 Na(+)(in) + 3 H(+)(out) = 2 Na(+)(out) + 3 H(+)(in). Its function is as follows. Na(+)/H(+) antiporter that extrudes sodium in exchange for external protons. Can also transport lithium and potassium. This Vibrio parahaemolyticus serotype O3:K6 (strain RIMD 2210633) protein is Na(+)/H(+) antiporter NhaB.